A 284-amino-acid polypeptide reads, in one-letter code: Large ribosomal subunit protein uL2 (284 aa).

2 disordered regions span residues 28–50 (ELKG…FKKS) and 232–284 (RGTA…DRRK). Residues 36 to 46 (RSVRPNKKLSF) are compositionally biased toward basic residues. Positions 240–250 (DHPHGGGEGRH) are enriched in basic and acidic residues. Residues 264–284 (KGLKTRDKRKSNKWIVKDRRK) show a composition bias toward basic residues.

It belongs to the universal ribosomal protein uL2 family. As to quaternary structure, part of the 50S ribosomal subunit. Forms a bridge to the 30S subunit in the 70S ribosome.

Its function is as follows. One of the primary rRNA binding proteins. Required for association of the 30S and 50S subunits to form the 70S ribosome, for tRNA binding and peptide bond formation. It has been suggested to have peptidyltransferase activity; this is somewhat controversial. Makes several contacts with the 16S rRNA in the 70S ribosome. In Chlamydia trachomatis serovar L2 (strain ATCC VR-902B / DSM 19102 / 434/Bu), this protein is Large ribosomal subunit protein uL2.